Reading from the N-terminus, the 612-residue chain is MPAYRSRTTTHGRNMAGARGLWRATGMKDSDFGKPIIAVVNSFTQFVPGHVHLKDLGQLVAREIEAAGGVAKEFNTIAVDDGIAMGHDGMLYSLPSREIIADSVEYMVNAHCADAMVCISNCDKITPGMLMAALRLNIPAVFVSGGPMEAGKVVLHGKKHALDLVDAMVAAADDSVSDEDVKVIERSACPTCGSCSGMFTANSMNCLTEALGLSLPGNGSTLATHADRKRLFVEAGHLVVDLARRYYEQEDERILPRSVASKKAFENAMALDIAMGGSTNTVLHILAAAYEGEVDFTMDDIDRLSRKVPCLSKVAPAKSDVHMEDVHRAGGIMSILGELEKGGLINRDCPTVHSETIGDAIDRWDITRTSSETVRNFFRAAPGGIPTQVAFSQEARWDDLDTDREKGVIRSVEHPFSKDGGLAVLKGNIALDGCIVKTAGVDESILKFSGPARVFESQDASVKAILGNEIKAGDVVVIRYEGPKGGPGMQEMLYPTSYLKSKGLGKACALITDGRFSGGTSGLSIGHVSPEAANGGTIGLVREGDIIDIDIPNRTISLRVDEAELATRRAEQDAKGWQPAEQRKRRVTTALKAYAAFATSADRGAVRDLGDR.

D81 serves as a coordination point for Mg(2+). Residue C122 participates in [2Fe-2S] cluster binding. Positions 123 and 124 each coordinate Mg(2+). Residue K124 is modified to N6-carboxylysine. C195 is a binding site for [2Fe-2S] cluster. E491 lines the Mg(2+) pocket. The Proton acceptor role is filled by S517.

The protein belongs to the IlvD/Edd family. In terms of assembly, homodimer. [2Fe-2S] cluster is required as a cofactor. It depends on Mg(2+) as a cofactor.

It carries out the reaction (2R)-2,3-dihydroxy-3-methylbutanoate = 3-methyl-2-oxobutanoate + H2O. The enzyme catalyses (2R,3R)-2,3-dihydroxy-3-methylpentanoate = (S)-3-methyl-2-oxopentanoate + H2O. It functions in the pathway amino-acid biosynthesis; L-isoleucine biosynthesis; L-isoleucine from 2-oxobutanoate: step 3/4. The protein operates within amino-acid biosynthesis; L-valine biosynthesis; L-valine from pyruvate: step 3/4. Functions in the biosynthesis of branched-chain amino acids. Catalyzes the dehydration of (2R,3R)-2,3-dihydroxy-3-methylpentanoate (2,3-dihydroxy-3-methylvalerate) into 2-oxo-3-methylpentanoate (2-oxo-3-methylvalerate) and of (2R)-2,3-dihydroxy-3-methylbutanoate (2,3-dihydroxyisovalerate) into 2-oxo-3-methylbutanoate (2-oxoisovalerate), the penultimate precursor to L-isoleucine and L-valine, respectively. In Sinorhizobium fredii (strain NBRC 101917 / NGR234), this protein is Dihydroxy-acid dehydratase.